Here is a 135-residue protein sequence, read N- to C-terminus: Small ribosomal subunit protein bS16 (135 aa).

Positions 82 to 135 (RPAETVGKAKQAAKREADAKQAAKEAAEAKAAAADEKAAEAEASDSAESESTEG) are disordered. The segment covering 94-121 (AKREADAKQAAKEAAEAKAAAADEKAAE) has biased composition (basic and acidic residues). Residues 123-135 (EASDSAESESTEG) show a composition bias toward acidic residues.

Belongs to the bacterial ribosomal protein bS16 family.

The protein is Small ribosomal subunit protein bS16 of Synechococcus sp. (strain CC9605).